We begin with the raw amino-acid sequence, 131 residues long: MKKHGVLNSEIAAVLASLGHTDTIVIADCGLPIPDGVKRIDLAVEIGKPSFLDVLQVVADDMAIEKVTLAEEVINNNAEIKKEIELKLIEPVFEYVCHEQFKEHTKKAKAIIRTGEATPYANVILHAGVIF.

His20 functions as the Proton donor in the catalytic mechanism. Substrate is bound by residues Asp28, His98, and 120-122; that span reads YAN.

This sequence belongs to the RbsD / FucU family. RbsD subfamily. In terms of assembly, homodecamer.

It localises to the cytoplasm. The enzyme catalyses beta-D-ribopyranose = beta-D-ribofuranose. The protein operates within carbohydrate metabolism; D-ribose degradation; D-ribose 5-phosphate from beta-D-ribopyranose: step 1/2. Functionally, catalyzes the interconversion of beta-pyran and beta-furan forms of D-ribose. This chain is D-ribose pyranase, found in Bacillus cereus (strain ZK / E33L).